Consider the following 244-residue polypeptide: MTELVYEQPLNEKIRSYLRLEYLDKQLQSNLNHDHQHRCFYPLFSLCELSERCDYRNEVLKDIERHLLQLSKWQELDHVDHQQIDLYINALTQAREPLQKPDRFGSQLKQDRFISALRQRFGMPGACCNFDLPQLHYWLAKPWEEKQQDYRSWIAHFEPLLTPITLLLQLTRSTAHYDNAVAHAGFYQGDSAQALALVRVKVDASHGCYPTISGHKNRFAIHFVQFEQQRHSDRSIDFLLATCA.

This sequence belongs to the ZapD family. In terms of assembly, interacts with FtsZ.

The protein localises to the cytoplasm. Its function is as follows. Cell division factor that enhances FtsZ-ring assembly. Directly interacts with FtsZ and promotes bundling of FtsZ protofilaments, with a reduction in FtsZ GTPase activity. The chain is Cell division protein ZapD from Shewanella baltica (strain OS223).